Here is a 258-residue protein sequence, read N- to C-terminus: Phosphate import ATP-binding protein PstB 2 (258 aa).

The 242-residue stretch at 12 to 253 folds into the ABC transporter domain; it reads IQVRDLNFYY…PQQKQTEDYI (242 aa). Position 44 to 51 (44 to 51) interacts with ATP; the sequence is GPSGCGKS.

The protein belongs to the ABC transporter superfamily. Phosphate importer (TC 3.A.1.7) family. In terms of assembly, the complex is composed of two ATP-binding proteins (PstB), two transmembrane proteins (PstC and PstA) and a solute-binding protein (PstS).

It localises to the cell inner membrane. It catalyses the reaction phosphate(out) + ATP + H2O = ADP + 2 phosphate(in) + H(+). Its function is as follows. Part of the ABC transporter complex PstSACB involved in phosphate import. Responsible for energy coupling to the transport system. This is Phosphate import ATP-binding protein PstB 2 from Yersinia pestis bv. Antiqua (strain Nepal516).